Reading from the N-terminus, the 361-residue chain is Phospho-N-acetylmuramoyl-pentapeptide-transferase (361 aa).

Helical transmembrane passes span 27–47, 72–92, 98–118, 135–155, 169–189, 200–220, 240–260, 263–283, 289–309, and 338–358; these read GAFF…INLL, TPTM…LLWA, YVWL…MDDF, LAMG…LHPE, TLIN…AGSA, GLAI…AYAV, IFVF…YNAP, AVFM…AIAV, IVLV…IIQV, and QIVI…LATL.

This sequence belongs to the glycosyltransferase 4 family. MraY subfamily. The cofactor is Mg(2+).

The protein localises to the cell inner membrane. It carries out the reaction UDP-N-acetyl-alpha-D-muramoyl-L-alanyl-gamma-D-glutamyl-meso-2,6-diaminopimeloyl-D-alanyl-D-alanine + di-trans,octa-cis-undecaprenyl phosphate = di-trans,octa-cis-undecaprenyl diphospho-N-acetyl-alpha-D-muramoyl-L-alanyl-D-glutamyl-meso-2,6-diaminopimeloyl-D-alanyl-D-alanine + UMP. It functions in the pathway cell wall biogenesis; peptidoglycan biosynthesis. In terms of biological role, catalyzes the initial step of the lipid cycle reactions in the biosynthesis of the cell wall peptidoglycan: transfers peptidoglycan precursor phospho-MurNAc-pentapeptide from UDP-MurNAc-pentapeptide onto the lipid carrier undecaprenyl phosphate, yielding undecaprenyl-pyrophosphoryl-MurNAc-pentapeptide, known as lipid I. In Dinoroseobacter shibae (strain DSM 16493 / NCIMB 14021 / DFL 12), this protein is Phospho-N-acetylmuramoyl-pentapeptide-transferase.